The primary structure comprises 89 residues: MALEKDEKTAIITDYQIHSSDTGSPQVQVALLTERINGLIEHLKVHPHDHHSRRGLLKLVGRRRRLLAYLASKDKDAYRKLIDSLGLRR.

This sequence belongs to the universal ribosomal protein uS15 family. As to quaternary structure, part of the 30S ribosomal subunit. Forms a bridge to the 50S subunit in the 70S ribosome, contacting the 23S rRNA.

Its function is as follows. One of the primary rRNA binding proteins, it binds directly to 16S rRNA where it helps nucleate assembly of the platform of the 30S subunit by binding and bridging several RNA helices of the 16S rRNA. Forms an intersubunit bridge (bridge B4) with the 23S rRNA of the 50S subunit in the ribosome. This Roseiflexus castenholzii (strain DSM 13941 / HLO8) protein is Small ribosomal subunit protein uS15.